Consider the following 289-residue polypeptide: Leucine--tRNA ligase subunit beta (289 aa).

Residues 45–49 (KMSKS) carry the 'KMSKS' region motif. Residue Lys-48 participates in ATP binding.

This sequence belongs to the class-I aminoacyl-tRNA synthetase family. In terms of assembly, seems to consist of an alpha chain and a beta chain.

It is found in the cytoplasm. The enzyme catalyses tRNA(Leu) + L-leucine + ATP = L-leucyl-tRNA(Leu) + AMP + diphosphate. The sequence is that of Leucine--tRNA ligase subunit beta (leuS') from Aquifex aeolicus (strain VF5).